A 75-amino-acid polypeptide reads, in one-letter code: Putative defensin-like protein 55 (75 aa).

The N-terminal stretch at 1–19 (MNITKAYVIFFLVVILTNS) is a signal peptide. Disulfide bonds link Cys-39–Cys-73, Cys-43–Cys-66, Cys-52–Cys-71, and Cys-56–Cys-72.

This sequence belongs to the DEFL family.

It is found in the secreted. In Arabidopsis thaliana (Mouse-ear cress), this protein is Putative defensin-like protein 55.